The primary structure comprises 494 residues: Adenosylhomocysteinase (494 aa).

Substrate contacts are provided by Thr72, Asp155, and Glu217. Residue 218-220 participates in NAD(+) binding; it reads TTT. Substrate is bound by residues Lys247 and Asp251. NAD(+)-binding positions include Asn252, 281-286, Glu304, Asn339, 360-362, and Asn408; these read GYGDVG and IGH.

Belongs to the adenosylhomocysteinase family. NAD(+) is required as a cofactor.

Its subcellular location is the cytoplasm. It catalyses the reaction S-adenosyl-L-homocysteine + H2O = L-homocysteine + adenosine. It functions in the pathway amino-acid biosynthesis; L-homocysteine biosynthesis; L-homocysteine from S-adenosyl-L-homocysteine: step 1/1. Its function is as follows. May play a key role in the regulation of the intracellular concentration of adenosylhomocysteine. In Nocardia farcinica (strain IFM 10152), this protein is Adenosylhomocysteinase.